Consider the following 226-residue polypeptide: ATP synthase subunit a (226 aa).

The next 5 membrane-spanning stretches (helical) occupy residues 17–37, 79–99, 105–125, 168–188, and 200–222; these read FNYLFHLILVAIIVLIVAKLA, LVATIGLIVLTSNVIGIIPGF, SLNLTLCLALSVFLYYNFEGI, FGNIKGDDLFLMVVLSLAPWV, and MALLQTFIFMILTYVYLAGAVVV.

This sequence belongs to the ATPase A chain family. In terms of assembly, F-type ATPases have 2 components, CF(1) - the catalytic core - and CF(0) - the membrane proton channel. CF(1) has five subunits: alpha(3), beta(3), gamma(1), delta(1), epsilon(1). CF(0) has three main subunits: a(1), b(2) and c(9-12). The alpha and beta chains form an alternating ring which encloses part of the gamma chain. CF(1) is attached to CF(0) by a central stalk formed by the gamma and epsilon chains, while a peripheral stalk is formed by the delta and b chains.

The protein localises to the cell inner membrane. Its function is as follows. Key component of the proton channel; it plays a direct role in the translocation of protons across the membrane. The polypeptide is ATP synthase subunit a (Campylobacter fetus subsp. fetus (strain 82-40)).